Reading from the N-terminus, the 89-residue chain is Small ribosomal subunit protein uS14 (89 aa).

Belongs to the universal ribosomal protein uS14 family. As to quaternary structure, part of the 30S ribosomal subunit. Contacts proteins S3 and S10.

Its function is as follows. Binds 16S rRNA, required for the assembly of 30S particles and may also be responsible for determining the conformation of the 16S rRNA at the A site. This chain is Small ribosomal subunit protein uS14, found in Shouchella clausii (strain KSM-K16) (Alkalihalobacillus clausii).